The sequence spans 173 residues: Translation initiation factor IF-3 (173 aa).

The protein belongs to the IF-3 family. Monomer.

It localises to the cytoplasm. IF-3 binds to the 30S ribosomal subunit and shifts the equilibrium between 70S ribosomes and their 50S and 30S subunits in favor of the free subunits, thus enhancing the availability of 30S subunits on which protein synthesis initiation begins. This is Translation initiation factor IF-3 from Clostridium tetani (strain Massachusetts / E88).